A 293-amino-acid polypeptide reads, in one-letter code: Protease HtpX (293 aa).

2 helical membrane-spanning segments follow: residues 4 to 24 and 38 to 58; these read IGLF…VLSL and LTNL…ISLF. Histidine 145 provides a ligand contact to Zn(2+). Glutamate 146 is an active-site residue. Position 149 (histidine 149) interacts with Zn(2+). 2 consecutive transmembrane segments (helical) span residues 156 to 176 and 193 to 213; these read ITLS…ARII and IAFF…ASMI. A Zn(2+)-binding site is contributed by glutamate 222.

The protein belongs to the peptidase M48B family. Zn(2+) is required as a cofactor.

Its subcellular location is the cell inner membrane. In Cellvibrio japonicus (strain Ueda107) (Pseudomonas fluorescens subsp. cellulosa), this protein is Protease HtpX.